Here is a 417-residue protein sequence, read N- to C-terminus: NADH-quinone oxidoreductase subunit D (417 aa).

Belongs to the complex I 49 kDa subunit family. NDH-1 is composed of 14 different subunits. Subunits NuoB, C, D, E, F, and G constitute the peripheral sector of the complex.

It localises to the cell inner membrane. It catalyses the reaction a quinone + NADH + 5 H(+)(in) = a quinol + NAD(+) + 4 H(+)(out). Its function is as follows. NDH-1 shuttles electrons from NADH, via FMN and iron-sulfur (Fe-S) centers, to quinones in the respiratory chain. The immediate electron acceptor for the enzyme in this species is believed to be ubiquinone. Couples the redox reaction to proton translocation (for every two electrons transferred, four hydrogen ions are translocated across the cytoplasmic membrane), and thus conserves the redox energy in a proton gradient. The polypeptide is NADH-quinone oxidoreductase subunit D (Francisella tularensis subsp. tularensis (strain FSC 198)).